The chain runs to 183 residues: Ion-translocating oxidoreductase complex subunit B (183 aa).

Residues Met-1 to Ala-23 are hydrophobic. The 4Fe-4S domain maps to Glu-29 to Arg-88. [4Fe-4S] cluster contacts are provided by Cys-46, Cys-49, Cys-54, Cys-71, Cys-113, Cys-116, Cys-119, Cys-123, Cys-143, Cys-146, Cys-149, and Cys-153. 4Fe-4S ferredoxin-type domains are found at residues Ala-104–Lys-133 and Met-135–Val-163.

This sequence belongs to the 4Fe4S bacterial-type ferredoxin family. RnfB subfamily. In terms of assembly, the complex is composed of six subunits: RnfA, RnfB, RnfC, RnfD, RnfE and RnfG. The cofactor is [4Fe-4S] cluster.

Its subcellular location is the cell inner membrane. Part of a membrane-bound complex that couples electron transfer with translocation of ions across the membrane. In Azoarcus sp. (strain BH72), this protein is Ion-translocating oxidoreductase complex subunit B.